Reading from the N-terminus, the 469-residue chain is ATP-dependent protease ATPase subunit HslU (469 aa).

Residues I24 and 66–71 (GVGKTE) each bind ATP. The disordered stretch occupies residues 159-179 (LFGSMNQPDEPAEEEVDQELK). ATP contacts are provided by D282, E347, and R419.

It belongs to the ClpX chaperone family. HslU subfamily. As to quaternary structure, a double ring-shaped homohexamer of HslV is capped on each side by a ring-shaped HslU homohexamer. The assembly of the HslU/HslV complex is dependent on binding of ATP.

The protein resides in the cytoplasm. ATPase subunit of a proteasome-like degradation complex; this subunit has chaperone activity. The binding of ATP and its subsequent hydrolysis by HslU are essential for unfolding of protein substrates subsequently hydrolyzed by HslV. HslU recognizes the N-terminal part of its protein substrates and unfolds these before they are guided to HslV for hydrolysis. This chain is ATP-dependent protease ATPase subunit HslU, found in Listeria innocua serovar 6a (strain ATCC BAA-680 / CLIP 11262).